A 163-amino-acid polypeptide reads, in one-letter code: Crossover junction endodeoxyribonuclease RuvC (163 aa).

Active-site residues include aspartate 4, glutamate 65, and aspartate 138. Mg(2+) contacts are provided by aspartate 4, glutamate 65, and aspartate 138.

Belongs to the RuvC family. As to quaternary structure, homodimer which binds Holliday junction (HJ) DNA. The HJ becomes 2-fold symmetrical on binding to RuvC with unstacked arms; it has a different conformation from HJ DNA in complex with RuvA. In the full resolvosome a probable DNA-RuvA(4)-RuvB(12)-RuvC(2) complex forms which resolves the HJ. Mg(2+) is required as a cofactor.

It is found in the cytoplasm. The enzyme catalyses Endonucleolytic cleavage at a junction such as a reciprocal single-stranded crossover between two homologous DNA duplexes (Holliday junction).. The RuvA-RuvB-RuvC complex processes Holliday junction (HJ) DNA during genetic recombination and DNA repair. Endonuclease that resolves HJ intermediates. Cleaves cruciform DNA by making single-stranded nicks across the HJ at symmetrical positions within the homologous arms, yielding a 5'-phosphate and a 3'-hydroxyl group; requires a central core of homology in the junction. The consensus cleavage sequence is 5'-(A/T)TT(C/G)-3'. Cleavage occurs on the 3'-side of the TT dinucleotide at the point of strand exchange. HJ branch migration catalyzed by RuvA-RuvB allows RuvC to scan DNA until it finds its consensus sequence, where it cleaves and resolves the cruciform DNA. The polypeptide is Crossover junction endodeoxyribonuclease RuvC (Corynebacterium jeikeium (strain K411)).